Consider the following 251-residue polypeptide: Probable transcriptional regulatory protein MAB_2888c (251 aa).

A disordered region spans residues Met1–Arg20.

The protein belongs to the TACO1 family.

The protein resides in the cytoplasm. This is Probable transcriptional regulatory protein MAB_2888c from Mycobacteroides abscessus (strain ATCC 19977 / DSM 44196 / CCUG 20993 / CIP 104536 / JCM 13569 / NCTC 13031 / TMC 1543 / L948) (Mycobacterium abscessus).